Reading from the N-terminus, the 113-residue chain is U11-theraphotoxin-Hhn1m (113 aa).

Residues 1-21 form the signal peptide; it reads MNTVRGTFLLVFGLAASLGQA. A propeptide spanning residues 22–74 is cleaved from the precursor; that stretch reads DKNENRREMQKKTEQGKSYLNFAENLLLQKLEELEAKLLEKHSKKSKNSRQKR. Cystine bridges form between Cys-75-Cys-90, Cys-82-Cys-95, and Cys-89-Cys-110.

The protein belongs to the neurotoxin 14 (magi-1) family. 01 (HNTX-16) subfamily. In terms of tissue distribution, expressed by the venom gland.

Its subcellular location is the secreted. Its function is as follows. Probable ion channel inhibitor. The sequence is that of U11-theraphotoxin-Hhn1m from Cyriopagopus hainanus (Chinese bird spider).